We begin with the raw amino-acid sequence, 66 residues long: Large ribosomal subunit protein bL33c (66 aa).

The protein belongs to the bacterial ribosomal protein bL33 family.

The protein resides in the plastid. The protein localises to the chloroplast. The chain is Large ribosomal subunit protein bL33c from Aethionema cordifolium (Lebanon stonecress).